The primary structure comprises 506 residues: MKEYRVYLERARSRQQDFLYPLIFREYIYGLAYSHNFNRSIFVENGGYDNKYSLLNVKRLITRMYQQNHLIISTNDSNKNPFLVYNKNFYSQIISEGFAIVVEIPFFLQLSSSLEEAEIIKSYKNVRSIHSIFPFLEDKFTYLNYVSDIRIPYPIHLEILVQILRYWVKDVPFFHLLRXFLYDFCNWNCFTSTKKSISTFSKSNPRLFLFLYNFYVCEYESIFLFLRNKSSHLRLKSFSVFFERIFFYAKRKHLVEVFSKDFSYTLPFFKDPNIHYVRYQGKCILASKNVPFLMNKWKHYFIHLWQCFFDVWSQPRTIDINQLSEHSFQLLGYFSNVRLNRSVVRSQMLENTFLIEIVSKKLDIIVPIIPLIRSLAKAKFCNVLGHPISKPVWADSSDFDIIERFLRICRNLSHYYNGSSKKKSLYRIKYILRLSCIKTLACKHKSTVRAFLKRSGSEELLEEFFTEEEEILSLIFPRDSFTLHRFHRNRIWYLDILFSNDLVNDE.

It belongs to the intron maturase 2 family. MatK subfamily.

It localises to the plastid. It is found in the chloroplast. Usually encoded in the trnK tRNA gene intron. Probably assists in splicing its own and other chloroplast group II introns. In Trifolium fragiferum (Strawberry clover), this protein is Maturase K.